The primary structure comprises 154 residues: Endoribonuclease YbeY (154 aa).

His-114, His-118, and His-124 together coordinate Zn(2+).

Belongs to the endoribonuclease YbeY family. Zn(2+) serves as cofactor.

It is found in the cytoplasm. Its function is as follows. Single strand-specific metallo-endoribonuclease involved in late-stage 70S ribosome quality control and in maturation of the 3' terminus of the 16S rRNA. This chain is Endoribonuclease YbeY, found in Haemophilus influenzae (strain 86-028NP).